The primary structure comprises 189 residues: UPF0301 protein PA14_05290 (189 aa).

This sequence belongs to the UPF0301 (AlgH) family.

In Pseudomonas aeruginosa (strain UCBPP-PA14), this protein is UPF0301 protein PA14_05290.